We begin with the raw amino-acid sequence, 687 residues long: C-mannosyltransferase dpy-19 (687 aa).

11 helical membrane passes run 24–44 (GISGNLWLATVVLIGLFVGFL), 170–190 (ITGVFVVAGTVATSLFYLGVL), 191–211 (VSDSIFGGILSVLCFAFNHGE), 223–243 (ESFAFPFIIGHIAILTYIIKY), 253–273 (LLISAAVPALLFWQFTQFAFF), 276–296 (ICSIFAAFSMDLVPLDTAKTI), 303–323 (AFFISFVMLFGNEMMIAALYF), 324–344 (PSIWALATVIYISPMLAGIRL), 347–367 (LYLLILALIFGSITLGLKVGF), 415–435 (LSSTLLIPLALLSIGAFSWDF), and 454–474 (GEVIYNLVQLICSTTMAVLIM).

It belongs to the dpy-19 family.

The protein resides in the endoplasmic reticulum membrane. Its function is as follows. C-mannosyltransferase that mediates C-mannosylation of tryptophan residues on target proteins such as unc-5 and mig-21. Mediates the attachment of alpha-mannose in C-C linkage to the C2 of the indole ring of tryptophan. C-mannosylation takes place in the endoplasmic reticulum and frequently found in thrombospondin (TSP) type-1 repeats and in the WSXWS motif of type I cytokine receptors. Required to orient neuroblasts QL and QR correctly on the anterior/posterior (A/P) axis: QL and QR are born in the same A/P position, but polarize and migrate left/right asymmetrically, QL migrates toward the posterior and QR migrates toward the anterior. Required with unc-40 to express mab-5 correctly in the Q cell descendants. The polypeptide is C-mannosyltransferase dpy-19 (Caenorhabditis briggsae).